Reading from the N-terminus, the 146-residue chain is Large ribosomal subunit protein uL13 (146 aa).

The protein belongs to the universal ribosomal protein uL13 family. As to quaternary structure, part of the 50S ribosomal subunit.

In terms of biological role, this protein is one of the early assembly proteins of the 50S ribosomal subunit, although it is not seen to bind rRNA by itself. It is important during the early stages of 50S assembly. This is Large ribosomal subunit protein uL13 from Malacoplasma penetrans (strain HF-2) (Mycoplasma penetrans).